An 813-amino-acid chain; its full sequence is Putative ATPase, plasma membrane-like (813 aa).

At 1 to 66 (MATGDSLEDI…KKKEHITLRF (66 aa)) the chain is on the cytoplasmic side. A helical membrane pass occupies residues 67–86 (FALMFKPLSWVIQAAAIMAM). The Extracellular portion of the chain corresponds to 87–94 (LFANGDGR). A helical membrane pass occupies residues 95–115 (QLFLGIVCLLIVNTIICYLKE). The Cytoplasmic portion of the chain corresponds to 116 to 245 (DDAANVVAMA…GHFRKVVTEI (130 aa)). Residues 246–266 (ENLCVISIAIGISIEVIVMYW) form a helical membrane-spanning segment. Topologically, residues 267–275 (IQRRNFSDV) are extracellular. Residues 276–293 (INNLLVLVIGGIPLAMPT) traverse the membrane as a helical segment. Residues 294-555 (VLYVIMVTGS…ASRAILQQMK (262 aa)) lie on the Cytoplasmic side of the membrane. Aspartate 331 acts as the 4-aspartylphosphate intermediate in catalysis. Mg(2+) contacts are provided by aspartate 500 and aspartate 504. A helical membrane pass occupies residues 556–577 (HYTIYAVSITIRVVFGFMFIAL). Over 578 to 582 (IWKFD) the chain is Extracellular. The helical transmembrane segment at 583–605 (FSPFMVLAIALLNEETTKAITMD) threads the bilayer. The Cytoplasmic segment spans residues 606-622 (NVTNPSPTPDSLKLKEI). The helical transmembrane segment at 623–643 (FATGVVYGSYMALITVVFFWA) threads the bilayer. Over 644 to 664 (AYRTDIFPRTFHVRDLRGNEA) the chain is Extracellular. A helical transmembrane segment spans residues 665-685 (EMMCALYLQVSIMSQALFFVI). Residues 686–697 (QSRSWFFVERPG) are Cytoplasmic-facing. The helical transmembrane segment at 698–718 (ELLFLSFVTVQTIATTLAVYA) threads the bilayer. At 719–726 (SWETARIE) the chain is on the extracellular side. The helical transmembrane segment at 727 to 747 (GIGWSWAGVIWLYNIIFFFPL) threads the bilayer. At 748 to 813 (DIMKFGIRYI…SQDLRGVGWV (66 aa)) the chain is on the cytoplasmic side. Serine 776 bears the Phosphoserine mark.

This sequence belongs to the cation transport ATPase (P-type) (TC 3.A.3) family. Type IIIA subfamily.

The protein resides in the membrane. This is Putative ATPase, plasma membrane-like from Arabidopsis thaliana (Mouse-ear cress).